A 201-amino-acid chain; its full sequence is Peroxiredoxin 2 (201 aa).

One can recognise a Thioredoxin domain in the interval 3 to 156 (VYLGKRAPDF…ILRSVKALQA (154 aa)). Cys-44 functions as the Cysteine sulfenic acid (-SOH) intermediate in the catalytic mechanism. Residue Arg-119 coordinates substrate.

Belongs to the peroxiredoxin family. Prx6 subfamily. Homodecamer. Pentamer of dimers that assemble into a ring structure.

It localises to the cytoplasm. The enzyme catalyses a hydroperoxide + [thioredoxin]-dithiol = an alcohol + [thioredoxin]-disulfide + H2O. Functionally, thiol-specific peroxidase that catalyzes the reduction of hydrogen peroxide and organic hydroperoxides to water and alcohols, respectively. Plays a role in cell protection against oxidative stress by detoxifying peroxides. The polypeptide is Peroxiredoxin 2 (Picrophilus torridus (strain ATCC 700027 / DSM 9790 / JCM 10055 / NBRC 100828 / KAW 2/3)).